The following is a 488-amino-acid chain: Proline--tRNA ligase (488 aa).

The protein belongs to the class-II aminoacyl-tRNA synthetase family. ProS type 3 subfamily. As to quaternary structure, homodimer.

It localises to the cytoplasm. The enzyme catalyses tRNA(Pro) + L-proline + ATP = L-prolyl-tRNA(Pro) + AMP + diphosphate. In terms of biological role, catalyzes the attachment of proline to tRNA(Pro) in a two-step reaction: proline is first activated by ATP to form Pro-AMP and then transferred to the acceptor end of tRNA(Pro). The chain is Proline--tRNA ligase from Pyrobaculum aerophilum (strain ATCC 51768 / DSM 7523 / JCM 9630 / CIP 104966 / NBRC 100827 / IM2).